The chain runs to 114 residues: BolA-like protein DDB_G0274169 (114 aa).

A compositionally biased stretch (polar residues) spans 88 to 98 (TQWKKNNQTKI). The disordered stretch occupies residues 88–114 (TQWKKNNQTKINVDDDKSPSCKGGFGK).

The protein belongs to the BolA/IbaG family.

The sequence is that of BolA-like protein DDB_G0274169 from Dictyostelium discoideum (Social amoeba).